The sequence spans 249 residues: Benzil reductase ((S)-benzoin forming) (249 aa).

Positions 6, 87, 154, 158, 189, and 191 each coordinate NADP(+). Catalysis depends on Tyr-154, which acts as the Proton acceptor.

Belongs to the short-chain dehydrogenases/reductases (SDR) family.

It is found in the cytoplasm. It catalyses the reaction (S)-benzoin + NADP(+) = benzil + NADPH + H(+). The catalysed reaction is 2-hydroxy-1-phenyl-1-propanone + NADP(+) = 1-phenyl-1,2-propanedione + NADPH + H(+). Its activity is regulated as follows. Inhibited by Cibacron blue 3GA, a general SDR family inhibitor. In terms of biological role, reduces benzil stereospecifically to (S)-benzoin. Can also reduce 1-phenyl-1,2-propanedione, 1,4-naphthoquinone, 1-(4-methyl-phenyl)-2-phenyl-ethane-1,2-dione, 1-(4-fluoro-phenyl)-2-phenyl-ethane-1,2-dione, methyl benzoylformate and p-nitrobenzaldehyde in decreasing order. This chain is Benzil reductase ((S)-benzoin forming), found in Bacillus cereus.